A 422-amino-acid polypeptide reads, in one-letter code: Kynurenine--oxoglutarate transaminase 1 (422 aa).

2 residues coordinate substrate: glycine 36 and asparagine 185. Residue lysine 247 is modified to N6-(pyridoxal phosphate)lysine. Substrate is bound at residue arginine 398.

The protein belongs to the class-I pyridoxal-phosphate-dependent aminotransferase family. Homodimer. It depends on pyridoxal 5'-phosphate as a cofactor.

The protein resides in the cytoplasm. The protein localises to the cytosol. It carries out the reaction L-kynurenine + 2-oxoglutarate = kynurenate + L-glutamate + H2O. The catalysed reaction is 3-phenylpyruvate + L-glutamine = 2-oxoglutaramate + L-phenylalanine. The enzyme catalyses an S-substituted L-cysteine + H2O = a thiol + pyruvate + NH4(+). Its pathway is amino-acid degradation; L-kynurenine degradation; kynurenate from L-kynurenine: step 1/2. Inhibited by tryptophan, indole-3-pyruvic acid, 3-indolepropionic acid, DL-indole-3-lactic acid, indole-3-acetic acid (IAC), amino-oxyacetate (AOAA), aminooxy-phenylpropionic acid (AOPP) and Tris. Its function is as follows. Catalyzes the irreversible transamination of the L-tryptophan metabolite L-kynurenine to form kynurenic acid (KA), an intermediate in the tryptophan catabolic pathway which is also a broad spectrum antagonist of the three ionotropic excitatory amino acid receptors among others. Also metabolizes the cysteine conjugates of certain halogenated alkenes and alkanes to form reactive metabolites. Catalyzes the beta-elimination of S-conjugates and Se-conjugates of L-(seleno)cysteine, resulting in the cleavage of the C-S or C-Se bond. In Homo sapiens (Human), this protein is Kynurenine--oxoglutarate transaminase 1.